Consider the following 44-residue polypeptide: Poly-ADP-ribosylation-amplifying and CtIP-maintaining micropeptide (44 aa).

The segment at Met1–Leu44 is disordered. Basic residues predominate over residues Pro24 to Leu44.

As to quaternary structure, interacts with KLHL15; preventing ubiquitination and degradation of RBBP8/CtIP. Interacts with PARP1.

The protein resides in the nucleus. It is found in the nucleolus. It localises to the chromosome. Micropeptide that acts as a regulator of DNA repair both by preventing KLHL15-mediated ubiquitination and degradation of RBBP8/CtIP, and by promoting the poly-ADP-ribosyltransferase activity of PARP1. Prevents KLHL15-mediated ubiquitination of RBBP8/CtIP by competitively blocking the association between KLHL15 and RBBP8/CtIP. Recruited to DNA damage sites via association with poly-ADP-ribose chains, and enhances the poly-ADP-ribosyltransferase activity of PARP1. This chain is Poly-ADP-ribosylation-amplifying and CtIP-maintaining micropeptide, found in Homo sapiens (Human).